Reading from the N-terminus, the 473-residue chain is Cyprosin (473 aa).

A propeptide spans 1-33 (LKKRKVNILNHPGEHAGSNDANARRKYGVRGNF) (activation peptide). A Peptidase A1 domain is found at 51 to 470 (YFGEIGIGTP…DYGNLRVGFA (420 aa)). Aspartate 69 is an active-site residue. 2 disulfide bridges follow: cysteine 82–cysteine 88 and cysteine 247–cysteine 251. Residue aspartate 256 is part of the active site. The Saposin B-type domain maps to 281–384 (VMSQQCKSLV…DKLCERLPSP (104 aa)). 4 disulfide bridges follow: cysteine 286/cysteine 378, cysteine 311/cysteine 350, cysteine 317/cysteine 347, and cysteine 392/cysteine 429. Residue asparagine 364 is glycosylated (N-linked (GlcNAc...) asparagine).

This sequence belongs to the peptidase A1 family. As to expression, mostly present in the violet parts of styles and corollas of mature flowers.

The sequence is that of Cyprosin (CYPRO1) from Cynara cardunculus (Cardoon).